A 257-amino-acid chain; its full sequence is NAD-capped RNA hydrolase NudC (257 aa).

Arg-69 contributes to the substrate binding site. Zn(2+) contacts are provided by Cys-98 and Cys-101. Glu-111 contributes to the substrate binding site. The Zn(2+) site is built by Cys-116 and Cys-119. Residue Tyr-124 coordinates substrate. The region spanning 125–248 (PQIAPCIIVA…TVARRLIEDT (124 aa)) is the Nudix hydrolase domain. The a divalent metal cation site is built by Ala-158, Glu-174, and Glu-178. The Nudix box signature appears at 159–180 (GFVEVGETLEQAVAREVMEESG). 192 to 199 (QPWPFPQS) provides a ligand contact to substrate. A divalent metal cation is bound at residue Glu-219. Position 241 (Ala-241) interacts with substrate.

Belongs to the Nudix hydrolase family. NudC subfamily. As to quaternary structure, homodimer. Requires Mg(2+) as cofactor. It depends on Mn(2+) as a cofactor. Zn(2+) serves as cofactor.

It catalyses the reaction a 5'-end NAD(+)-phospho-ribonucleoside in mRNA + H2O = a 5'-end phospho-adenosine-phospho-ribonucleoside in mRNA + beta-nicotinamide D-ribonucleotide + 2 H(+). The enzyme catalyses NAD(+) + H2O = beta-nicotinamide D-ribonucleotide + AMP + 2 H(+). The catalysed reaction is NADH + H2O = reduced beta-nicotinamide D-ribonucleotide + AMP + 2 H(+). Its function is as follows. mRNA decapping enzyme that specifically removes the nicotinamide adenine dinucleotide (NAD) cap from a subset of mRNAs by hydrolyzing the diphosphate linkage to produce nicotinamide mononucleotide (NMN) and 5' monophosphate mRNA. The NAD-cap is present at the 5'-end of some mRNAs and stabilizes RNA against 5'-processing. Has preference for mRNAs with a 5'-end purine. Catalyzes the hydrolysis of a broad range of dinucleotide pyrophosphates. In Salmonella heidelberg (strain SL476), this protein is NAD-capped RNA hydrolase NudC.